The sequence spans 229 residues: DNA mismatch repair protein MutH (229 aa).

The protein belongs to the MutH family.

It is found in the cytoplasm. Its function is as follows. Sequence-specific endonuclease that cleaves unmethylated GATC sequences. It is involved in DNA mismatch repair. This Shigella flexneri serotype 5b (strain 8401) protein is DNA mismatch repair protein MutH.